A 97-amino-acid polypeptide reads, in one-letter code: Class II hydrophobin 1 (97 aa).

Residues 1–16 (MKFFAIAALFAAAAVA) form the signal peptide. A propeptide spanning residues 17-22 (QPLEDR) is cleaved from the precursor. 4 disulfides stabilise this stretch: Cys-30–Cys-79, Cys-40–Cys-70, Cys-41–Cys-53, and Cys-80–Cys-91.

The protein belongs to the cerato-ulmin hydrophobin family. Homotetramer. Further self-assembles to form highly ordered films at water-air interfaces through intermolecular interactions.

It localises to the secreted. The protein localises to the cell wall. Functionally, aerial growth, conidiation, and dispersal of filamentous fungi in the environment rely upon a capability of their secreting small amphipathic proteins called hydrophobins (HPBs) with low sequence identity. Class I can self-assemble into an outermost layer of rodlet bundles on aerial cell surfaces, conferring cellular hydrophobicity that supports fungal growth, development and dispersal; whereas Class II form highly ordered films at water-air interfaces through intermolecular interactions but contribute nothing to the rodlet structure. Hbf1 is a class II hydrophobin that has a role in hyphal development and is in particular required for the formation of aerial hyphae. This is Class II hydrophobin 1 from Hypocrea jecorina (Trichoderma reesei).